A 74-amino-acid chain; its full sequence is MLPVANIWRLLHVNDVPTINFARSGRALLTSSVSETFTDITFHPWGVYESSEEGVERQNITVLFFQDIERFFSC.

This is an uncharacterized protein from Saccharomyces cerevisiae (strain ATCC 204508 / S288c) (Baker's yeast).